Reading from the N-terminus, the 56-residue chain is Large ribosomal subunit protein bL32 (56 aa).

The segment covering 1–16 (MAVQKSKKSRSMRGMR) has biased composition (basic residues). Positions 1 to 21 (MAVQKSKKSRSMRGMRRSHDA) are disordered.

Belongs to the bacterial ribosomal protein bL32 family.

The sequence is that of Large ribosomal subunit protein bL32 from Vibrio atlanticus (strain LGP32) (Vibrio splendidus (strain Mel32)).